A 379-amino-acid chain; its full sequence is RIB43A-like with coiled-coils protein 1 (379 aa).

Coiled-coil stretches lie at residues 43-111 (EALN…RCEL) and 285-337 (IRKV…EFRR).

Belongs to the RIB43A family. In terms of assembly, microtubule inner protein component of sperm flagellar doublet microtubules.

The protein localises to the cytoplasm. It localises to the cytoskeleton. It is found in the flagellum axoneme. The chain is RIB43A-like with coiled-coils protein 1 (RIBC1) from Bos taurus (Bovine).